A 302-amino-acid chain; its full sequence is MTITGSRGFPDGYLAPGSSFLDFAAQHAPTIMPGTQPTFDTIPQDIAPHGTTIVALEYHNGIIIAGDRRATMGTTIAHREIEKVFAADEHSAIAIAGTAGLAIELVRLFQLELEHYEKIEGTPLSLDGKANRLSTMLRSHLHLALQGLPIVPIFAGWDSTRHQGRLFAYDVTGGRYEEPNFTCAGSGSVFARSALKKLWKPQLDATRAITIALEALWDAADDDTATAGPDIIRRIWPIIAVIDHKGFRYVSEADLAHANDTIAHQRSQDHQHVRVLEPGRDGPGNRLPSQGSATIIPESDQS.

A propeptide spans 1–50 (MTITGSRGFPDGYLAPGSSFLDFAAQHAPTIMPGTQPTFDTIPQDIAPHG) (removed in mature form; by autocatalysis). The active-site Nucleophile is Thr51. The interval 277-302 (EPGRDGPGNRLPSQGSATIIPESDQS) is disordered. Positions 287-302 (LPSQGSATIIPESDQS) are enriched in polar residues.

It belongs to the peptidase T1B family. In terms of assembly, the 20S proteasome core is composed of 14 alpha and 14 beta subunits that assemble into four stacked heptameric rings, resulting in a barrel-shaped structure. The two inner rings, each composed of seven catalytic beta subunits, are sandwiched by two outer rings, each composed of seven alpha subunits. The catalytic chamber with the active sites is on the inside of the barrel. Has a gated structure, the ends of the cylinder being occluded by the N-termini of the alpha-subunits. Is capped by the proteasome-associated ATPase, ARC.

It is found in the cytoplasm. It carries out the reaction Cleavage of peptide bonds with very broad specificity.. The protein operates within protein degradation; proteasomal Pup-dependent pathway. Its activity is regulated as follows. The formation of the proteasomal ATPase ARC-20S proteasome complex, likely via the docking of the C-termini of ARC into the intersubunit pockets in the alpha-rings, may trigger opening of the gate for substrate entry. Interconversion between the open-gate and close-gate conformations leads to a dynamic regulation of the 20S proteasome proteolysis activity. Component of the proteasome core, a large protease complex with broad specificity involved in protein degradation. This chain is Proteasome subunit beta, found in Jonesia denitrificans (strain ATCC 14870 / DSM 20603 / BCRC 15368 / CIP 55.134 / JCM 11481 / NBRC 15587 / NCTC 10816 / Prevot 55134) (Listeria denitrificans).